A 108-amino-acid chain; its full sequence is Peptidyl-prolyl cis-trans isomerase FKBP1A (108 aa).

The PPIase FKBP-type domain maps to 20 to 108; it reads GQTCVVHYTG…IFDVELLKLE (89 aa). K53 carries the post-translational modification N6-acetyllysine; alternate. K53 is subject to N6-succinyllysine; alternate.

The protein belongs to the FKBP-type PPIase family. FKBP1 subfamily. Interacts with TGFBR1; prevents TGFBR1 phosphorylation by TGFBR2 and stabilizes it in the inactive conformation. Interacts with ACVR1B and SMAD7. Identified in a complex composed of RYR1, PDE4D, PKA, FKBP1A and protein phosphatase 1 (PP1). Interacts directly with RYR2 and RYR3. Interacts with GLMN; rapamycin and FK506 abolish the interaction with GLMN in a dose dependent manner. Interacts directly with RYR1.

It localises to the cytoplasm. It is found in the cytosol. The protein localises to the sarcoplasmic reticulum membrane. It catalyses the reaction [protein]-peptidylproline (omega=180) = [protein]-peptidylproline (omega=0). Inhibited by both FK506 and rapamycin. Its function is as follows. Keeps in an inactive conformation TGFBR1, the TGF-beta type I serine/threonine kinase receptor, preventing TGF-beta receptor activation in absence of ligand. May modulate the RYR1 calcium channel activity. PPIases accelerate the folding of proteins. It catalyzes the cis-trans isomerization of proline imidic peptide bonds in oligopeptides. In Bos taurus (Bovine), this protein is Peptidyl-prolyl cis-trans isomerase FKBP1A (FKBP1A).